We begin with the raw amino-acid sequence, 123 residues long: Small ribosomal subunit protein uS12c (123 aa).

Belongs to the universal ribosomal protein uS12 family. Part of the 30S ribosomal subunit.

Its subcellular location is the plastid. The protein localises to the chloroplast. In terms of biological role, with S4 and S5 plays an important role in translational accuracy. Located at the interface of the 30S and 50S subunits. This chain is Small ribosomal subunit protein uS12c (rps12), found in Physcomitrium patens (Spreading-leaved earth moss).